The following is a 409-amino-acid chain: TNF receptor-associated factor family protein DDB_G0273435/DDB_G0273505 (409 aa).

The RING-type; degenerate zinc-finger motif lies at cysteine 20–cysteine 59. 2 TRAF-type zinc fingers span residues lysine 75 to asparagine 145 and asparagine 145 to serine 201. A coiled-coil region spans residues histidine 221 to aspartate 250. The 129-residue stretch at serine 252–isoleucine 380 folds into the MATH domain.

It belongs to the TNF receptor-associated factor family. A subfamily.

Its subcellular location is the cytoplasm. Its function is as follows. Probable adapter protein and signal transducer that links members of the tumor necrosis factor receptor family to different signaling pathways by association with the receptor cytoplasmic domain and kinases. The sequence is that of TNF receptor-associated factor family protein DDB_G0273435/DDB_G0273505 from Dictyostelium discoideum (Social amoeba).